The chain runs to 438 residues: Anaerobic glycerol-3-phosphate dehydrogenase subunit B (438 aa).

The protein belongs to the anaerobic G-3-P dehydrogenase subunit B family. As to quaternary structure, composed of a catalytic GlpA/B dimer and of membrane bound GlpC. It depends on FMN as a cofactor.

The catalysed reaction is a quinone + sn-glycerol 3-phosphate = dihydroxyacetone phosphate + a quinol. It functions in the pathway polyol metabolism; glycerol degradation via glycerol kinase pathway; glycerone phosphate from sn-glycerol 3-phosphate (anaerobic route): step 1/1. Its function is as follows. Conversion of glycerol 3-phosphate to dihydroxyacetone. Uses fumarate or nitrate as electron acceptor. The chain is Anaerobic glycerol-3-phosphate dehydrogenase subunit B from Vibrio vulnificus (strain CMCP6).